The primary structure comprises 170 residues: ATP synthase subunit b (170 aa).

The chain crosses the membrane as a helical span at residues 11–31 (GLNTGDIIFQLIAMLILLALL).

It belongs to the ATPase B chain family. F-type ATPases have 2 components, F(1) - the catalytic core - and F(0) - the membrane proton channel. F(1) has five subunits: alpha(3), beta(3), gamma(1), delta(1), epsilon(1). F(0) has three main subunits: a(1), b(2) and c(10-14). The alpha and beta chains form an alternating ring which encloses part of the gamma chain. F(1) is attached to F(0) by a central stalk formed by the gamma and epsilon chains, while a peripheral stalk is formed by the delta and b chains.

Its subcellular location is the cell membrane. Its function is as follows. F(1)F(0) ATP synthase produces ATP from ADP in the presence of a proton or sodium gradient. F-type ATPases consist of two structural domains, F(1) containing the extramembraneous catalytic core and F(0) containing the membrane proton channel, linked together by a central stalk and a peripheral stalk. During catalysis, ATP synthesis in the catalytic domain of F(1) is coupled via a rotary mechanism of the central stalk subunits to proton translocation. Component of the F(0) channel, it forms part of the peripheral stalk, linking F(1) to F(0). The protein is ATP synthase subunit b of Bacillus pumilus (strain SAFR-032).